A 229-amino-acid polypeptide reads, in one-letter code: Peptidase E (229 aa).

Active-site charge relay system residues include S120, D135, and H157.

The protein belongs to the peptidase S51 family.

The protein localises to the cytoplasm. It catalyses the reaction Dipeptidase E catalyzes the hydrolysis of dipeptides Asp-|-Xaa. It does not act on peptides with N-terminal Glu, Asn or Gln, nor does it cleave isoaspartyl peptides.. Its function is as follows. Hydrolyzes dipeptides containing N-terminal aspartate residues. May play a role in allowing the cell to use peptide aspartate to spare carbon otherwise required for the synthesis of the aspartate family of amino acids. This chain is Peptidase E, found in Salmonella paratyphi A (strain AKU_12601).